The chain runs to 196 residues: Protein hunchback (196 aa).

Disordered regions lie at residues 16–60 (SHHH…NTNL) and 90–196 (AMTP…KYMA). A compositionally biased stretch (basic residues) spans 17–30 (HHHHHHHAHHSYHQ). The segment covering 92–103 (TPSSSNNDQNSP) has biased composition (polar residues). Residues 125–144 (PTATTTTTPAAAAPTTTAAT) are compositionally biased toward low complexity. A compositionally biased stretch (basic and acidic residues) spans 176-196 (AEREKEHDLMSNSSEDMKYMA).

This sequence belongs to the hunchback C2H2-type zinc-finger protein family.

Its subcellular location is the nucleus. Gap class segmentation protein that controls development of head structures. In Drosophila silvestris (Fruit fly), this protein is Protein hunchback (hb).